Reading from the N-terminus, the 1052-residue chain is Eukaryotic translation initiation factor 3 subunit A (1052 aa).

The PCI domain occupies 325–505; it reads IQYAASAVLL…GSLHFNNNIF (181 aa). 2 coiled-coil regions span residues 568 to 712 and 769 to 882; these read REHV…RLRE and EKTA…SAQT. Composition is skewed to basic and acidic residues over residues 570 to 600 and 793 to 874; these read HVSN…EQMQ and KIRL…EQEK. 2 disordered regions span residues 570-606 and 793-1052; these read HVSN…HQNQ and KIRL…DDKN. 2 stretches are compositionally biased toward polar residues: residues 875–887 and 895–906; these read LSNL…QPTW and APTTAAPSSMRV. 4 stretches are compositionally biased toward basic and acidic residues: residues 942–952, 960–970, 979–1013, and 1037–1052; these read DRGDRAPRDTG, RAPR…ERRA, and GSER…DDKN.

This sequence belongs to the eIF-3 subunit A family. In terms of assembly, component of the eukaryotic translation initiation factor 3 (eIF-3) complex.

The protein resides in the cytoplasm. In terms of biological role, RNA-binding component of the eukaryotic translation initiation factor 3 (eIF-3) complex, which is involved in protein synthesis of a specialized repertoire of mRNAs and, together with other initiation factors, stimulates binding of mRNA and methionyl-tRNAi to the 40S ribosome. The eIF-3 complex specifically targets and initiates translation of a subset of mRNAs involved in cell proliferation. The polypeptide is Eukaryotic translation initiation factor 3 subunit A (Monosiga brevicollis (Choanoflagellate)).